A 302-amino-acid chain; its full sequence is MGLTKNFAFLVFCCQRYCSMDGEAFEISLLDGEEDRFGGTVVNLMEVESMTIGDFDSKLDVSLKAWKDQGKKGIWIKLPSELSSLVDTAIKKGFTYHHAENEYVMLTFWLPEPPSTLPCNASHRIGIGAFVLNKNGEMLVVQENSGYFKDKNVWKVPTGTIKEGESIWAGAVREVKEETDIDAEFVEVLSFMESHQAVWQRKTDIFFVCELEARTFEIQKQDSEIHAAKWMPVEEYVNQPYHNKEGNEMFKLIANICLKRSREKYTGFVLTTNSAKKSLYCSVDHANLLKETADQASTSLSD.

The Nudix hydrolase domain occupies 122–254 (SHRIGIGAFV…EGNEMFKLIA (133 aa)). The Nudix box motif lies at 159 to 180 (GTIKEGESIWAGAVREVKEETD). Mg(2+)-binding residues include glutamate 174 and glutamate 178.

Belongs to the Nudix hydrolase family. Mg(2+) is required as a cofactor. Requires Mn(2+) as cofactor. Expressed in roots, stems and leaves.

Its function is as follows. Probably mediates the hydrolysis of some nucleoside diphosphate derivatives. This chain is Nudix hydrolase 5 (NUDT5), found in Arabidopsis thaliana (Mouse-ear cress).